The primary structure comprises 422 residues: Phosphoribosylamine--glycine ligase (422 aa).

An ATP-grasp domain is found at 107–313 (KDLMKKYDIP…LVQVLLDLLD (207 aa)). 133-194 (VQEKGAPIVI…EEYLSGEEFS (62 aa)) is a binding site for ATP. Mg(2+) is bound by residues Glu283 and Asn285.

This sequence belongs to the GARS family. It depends on Mg(2+) as a cofactor. The cofactor is Mn(2+).

It catalyses the reaction 5-phospho-beta-D-ribosylamine + glycine + ATP = N(1)-(5-phospho-beta-D-ribosyl)glycinamide + ADP + phosphate + H(+). It participates in purine metabolism; IMP biosynthesis via de novo pathway; N(1)-(5-phospho-D-ribosyl)glycinamide from 5-phospho-alpha-D-ribose 1-diphosphate: step 2/2. This Bacillus subtilis (strain 168) protein is Phosphoribosylamine--glycine ligase.